The following is a 405-amino-acid chain: Acetate kinase (405 aa).

Residue asparagine 7 participates in Mg(2+) binding. Position 14 (lysine 14) interacts with ATP. Arginine 92 is a binding site for substrate. Aspartate 149 serves as the catalytic Proton donor/acceptor. ATP contacts are provided by residues 209-213 and 284-286; these read HLGNG and DMR. Residue glutamate 389 coordinates Mg(2+).

The protein belongs to the acetokinase family. In terms of assembly, homodimer. It depends on Mg(2+) as a cofactor. Mn(2+) is required as a cofactor.

Its subcellular location is the cytoplasm. The enzyme catalyses acetate + ATP = acetyl phosphate + ADP. Its pathway is metabolic intermediate biosynthesis; acetyl-CoA biosynthesis; acetyl-CoA from acetate: step 1/2. Its function is as follows. Catalyzes the formation of acetyl phosphate from acetate and ATP. Can also catalyze the reverse reaction. The polypeptide is Acetate kinase (Borreliella burgdorferi (strain ZS7) (Borrelia burgdorferi)).